We begin with the raw amino-acid sequence, 279 residues long: Formamidopyrimidine-DNA glycosylase (279 aa).

Residue Pro2 is the Schiff-base intermediate with DNA of the active site. Glu3 acts as the Proton donor in catalysis. The active-site Proton donor; for beta-elimination activity is Lys58. DNA-binding residues include His92, Arg111, and Arg153. Residues 238-272 (TVYGKEGQSCLSCSSTIIKTKHSGRSTFYCKTCQY) form an FPG-type zinc finger. The Proton donor; for delta-elimination activity role is filled by Arg262.

This sequence belongs to the FPG family. In terms of assembly, monomer. It depends on Zn(2+) as a cofactor.

The enzyme catalyses Hydrolysis of DNA containing ring-opened 7-methylguanine residues, releasing 2,6-diamino-4-hydroxy-5-(N-methyl)formamidopyrimidine.. The catalysed reaction is 2'-deoxyribonucleotide-(2'-deoxyribose 5'-phosphate)-2'-deoxyribonucleotide-DNA = a 3'-end 2'-deoxyribonucleotide-(2,3-dehydro-2,3-deoxyribose 5'-phosphate)-DNA + a 5'-end 5'-phospho-2'-deoxyribonucleoside-DNA + H(+). Functionally, involved in base excision repair of DNA damaged by oxidation or by mutagenic agents. Acts as a DNA glycosylase that recognizes and removes damaged bases. Has a preference for oxidized purines, such as 7,8-dihydro-8-oxoguanine (8-oxoG). Has AP (apurinic/apyrimidinic) lyase activity and introduces nicks in the DNA strand. Cleaves the DNA backbone by beta-delta elimination to generate a single-strand break at the site of the removed base with both 3'- and 5'-phosphates. In Rickettsia massiliae (strain Mtu5), this protein is Formamidopyrimidine-DNA glycosylase.